We begin with the raw amino-acid sequence, 148 residues long: uncharacterized protein (148 aa).

The segment covering 1–17 (MCPPVRQRPAQAPPAKR) has biased composition (low complexity). Disordered regions lie at residues 1–86 (MCPP…VQSP) and 122–148 (RAHR…TSPC). A compositionally biased stretch (basic residues) spans 38–57 (RPPKMQRRPRPPVAKRRRFP). Polar residues predominate over residues 134–148 (QSRQRPSPDSQTSPC).

Belongs to the Epstein-Barr virus BLLF2 family.

This is an uncharacterized protein from Homo sapiens (Human).